An 831-amino-acid chain; its full sequence is Probable beta-glucosidase H (831 aa).

A glycan (N-linked (GlcNAc...) asparagine) is linked at Asn-13. Asp-225 is an active-site residue. Positions 389-549 constitute a PA14 domain; the sequence is RLLSNAVIHF…DAEEMINRAV (161 aa). Residues Asn-474, Asn-514, Asn-604, Asn-629, Asn-726, and Asn-823 are each glycosylated (N-linked (GlcNAc...) asparagine).

The protein belongs to the glycosyl hydrolase 3 family.

It localises to the secreted. The enzyme catalyses Hydrolysis of terminal, non-reducing beta-D-glucosyl residues with release of beta-D-glucose.. It participates in glycan metabolism; cellulose degradation. Beta-glucosidases are one of a number of cellulolytic enzymes involved in the degradation of cellulosic biomass. Catalyzes the last step releasing glucose from the inhibitory cellobiose. The sequence is that of Probable beta-glucosidase H (bglH) from Emericella nidulans (strain FGSC A4 / ATCC 38163 / CBS 112.46 / NRRL 194 / M139) (Aspergillus nidulans).